Consider the following 413-residue polypeptide: Scarecrow-like protein 21 (413 aa).

One can recognise a GRAS domain in the interval 41 to 413 (IVEAISRGDL…RILVSSCAWK (373 aa)). The segment at 48–108 (GDLKLVLVAC…VARLAASGSS (61 aa)) is leucine repeat I (LRI). Positions 127–192 (VYVLHEVCPY…GGAPNIRITG (66 aa)) are VHIID. The VHIID motif lies at 158 to 162 (IHIID). The tract at residues 201–233 (TVKKRLEKLAKKFDVPFRFNAVSRPSCEVEVEN) is leucine repeat II (LRII). The interval 242–336 (LGVNFAYMLH…QHCMARDVVN (95 aa)) is PFYRE. The tract at residues 339-413 (ACEGAERIER…RILVSSCAWK (75 aa)) is SAW.

Belongs to the GRAS family. Interacts with Meloidogyne incognita 16D10. As to expression, expressed in seedlings, roots, cotyledons, leaves and flowers.

The protein localises to the nucleus. Its function is as follows. Probable transcription factor involved in plant development. This chain is Scarecrow-like protein 21 (SCL21), found in Arabidopsis thaliana (Mouse-ear cress).